Consider the following 274-residue polypeptide: Large ribosomal subunit protein uL2 (274 aa).

2 disordered regions span residues 21–59 (KVGLSKDEPEKSLTSGKKSSGGRNNHGRITTRHRGGGHK) and 224–274 (AMNP…QLKG). Residues 32-42 (SLTSGKKSSGG) show a composition bias toward low complexity. Basic residues predominate over residues 45 to 59 (NHGRITTRHRGGGHK). Over residues 263–274 (KSSDKYIKQLKG) the composition is skewed to basic and acidic residues.

Belongs to the universal ribosomal protein uL2 family. Part of the 50S ribosomal subunit. Forms a bridge to the 30S subunit in the 70S ribosome.

Its function is as follows. One of the primary rRNA binding proteins. Required for association of the 30S and 50S subunits to form the 70S ribosome, for tRNA binding and peptide bond formation. It has been suggested to have peptidyltransferase activity; this is somewhat controversial. Makes several contacts with the 16S rRNA in the 70S ribosome. The chain is Large ribosomal subunit protein uL2 from Wolbachia pipientis wMel.